The sequence spans 481 residues: NADH-quinone oxidoreductase subunit N (481 aa).

13 helical membrane passes run 14-34 (LILSVGALLLLLVAAFGGDGF), 38-57 (IGWGAVALFAAAGFSLTGPA), 76-96 (FAKLLIYIAAAVSVAVAPGFF), 108-128 (PVLILLSGVGMGMMVSAGDLL), 162-182 (FVLGALASGILLYGISLLYGF), 204-224 (MFGMVFVFAGLAFKISAVPFH), 235-255 (PTPVTAFFASAPKVAGMALLL), 272-292 (IVVFAALASTILGAVAAIGQT), 297-317 (LLAYSSINNVGFALFGLAAGS), 323-343 (ATMTYMAVYVAMTLGSFICVL), 369-389 (LAAAFAIFMFSLAGIPPLFGF), 403-423 (GFWPLAMVGIATSVIGAFYYL), and 449-469 (GLITLAALAVSPLGYLAIPLL).

This sequence belongs to the complex I subunit 2 family. In terms of assembly, NDH-1 is composed of 14 different subunits. Subunits NuoA, H, J, K, L, M, N constitute the membrane sector of the complex.

The protein resides in the cell inner membrane. The catalysed reaction is a quinone + NADH + 5 H(+)(in) = a quinol + NAD(+) + 4 H(+)(out). Its function is as follows. NDH-1 shuttles electrons from NADH, via FMN and iron-sulfur (Fe-S) centers, to quinones in the respiratory chain. The immediate electron acceptor for the enzyme in this species is believed to be ubiquinone. Couples the redox reaction to proton translocation (for every two electrons transferred, four hydrogen ions are translocated across the cytoplasmic membrane), and thus conserves the redox energy in a proton gradient. In Rhizorhabdus wittichii (strain DSM 6014 / CCUG 31198 / JCM 15750 / NBRC 105917 / EY 4224 / RW1) (Sphingomonas wittichii), this protein is NADH-quinone oxidoreductase subunit N.